The primary structure comprises 108 residues: ATP synthase peripheral stalk subunit F6, mitochondrial (108 aa).

A mitochondrion-targeting transit peptide spans 1–32; that stretch reads MILQRLFRFSSIIRSAVSVHFRRNIGVTAVAF. Lys-41, Lys-46, and Lys-79 each carry N6-acetyllysine. An N6-acetyllysine; alternate mark is found at Lys-84, Lys-94, and Lys-99. An N6-succinyllysine; alternate mark is found at Lys-84, Lys-94, and Lys-99. Lys-105 carries the N6-acetyllysine modification.

This sequence belongs to the eukaryotic ATPase subunit F6 family. In terms of assembly, component of the ATP synthase complex composed at least of ATP5F1A/subunit alpha, ATP5F1B/subunit beta, ATP5MC1/subunit c (homooctomer), MT-ATP6/subunit a, MT-ATP8/subunit 8, ATP5ME/subunit e, ATP5MF/subunit f, ATP5MG/subunit g, ATP5MK/subunit k, ATP5MJ/subunit j, ATP5F1C/subunit gamma, ATP5F1D/subunit delta, ATP5F1E/subunit epsilon, ATP5PF/subunit F6, ATP5PB/subunit b, ATP5PD/subunit d, ATP5PO/subunit OSCP. ATP synthase complex consists of a soluble F(1) head domain (subunits alpha(3) and beta(3)) - the catalytic core - and a membrane F(0) domain - the membrane proton channel (subunits c, a, 8, e, f, g, k and j). These two domains are linked by a central stalk (subunits gamma, delta, and epsilon) rotating inside the F1 region and a stationary peripheral stalk (subunits F6, b, d, and OSCP).

The protein localises to the mitochondrion. The protein resides in the mitochondrion inner membrane. Subunit F6, of the mitochondrial membrane ATP synthase complex (F(1)F(0) ATP synthase or Complex V) that produces ATP from ADP in the presence of a proton gradient across the membrane which is generated by electron transport complexes of the respiratory chain. ATP synthase complex consist of a soluble F(1) head domain - the catalytic core - and a membrane F(1) domain - the membrane proton channel. These two domains are linked by a central stalk rotating inside the F(1) region and a stationary peripheral stalk. During catalysis, ATP synthesis in the catalytic domain of F(1) is coupled via a rotary mechanism of the central stalk subunits to proton translocation. In vivo, can only synthesize ATP although its ATP hydrolase activity can be activated artificially in vitro. Part of the complex F(0) domain. Part of the complex F(0) domain and the peripheric stalk, which acts as a stator to hold the catalytic alpha(3)beta(3) subcomplex and subunit a/ATP6 static relative to the rotary elements. This Macaca fascicularis (Crab-eating macaque) protein is ATP synthase peripheral stalk subunit F6, mitochondrial.